A 360-amino-acid chain; its full sequence is Protein RecA (360 aa).

Gly69 to Thr76 contributes to the ATP binding site.

It belongs to the RecA family.

The protein localises to the cytoplasm. Functionally, can catalyze the hydrolysis of ATP in the presence of single-stranded DNA, the ATP-dependent uptake of single-stranded DNA by duplex DNA, and the ATP-dependent hybridization of homologous single-stranded DNAs. It interacts with LexA causing its activation and leading to its autocatalytic cleavage. This chain is Protein RecA, found in Trichodesmium erythraeum (strain IMS101).